Consider the following 203-residue polypeptide: Probable chemoreceptor glutamine deamidase CheD (203 aa).

The protein belongs to the CheD family.

It catalyses the reaction L-glutaminyl-[protein] + H2O = L-glutamyl-[protein] + NH4(+). Its function is as follows. Probably deamidates glutamine residues to glutamate on methyl-accepting chemotaxis receptors (MCPs), playing an important role in chemotaxis. This is Probable chemoreceptor glutamine deamidase CheD from Janthinobacterium sp. (strain Marseille) (Minibacterium massiliensis).